We begin with the raw amino-acid sequence, 332 residues long: Glycerol-3-phosphate dehydrogenase [NAD(P)+] (332 aa).

4 residues coordinate NADPH: Ser-11, Phe-12, Lys-32, and Lys-106. Residues Lys-106, Gly-137, and Ser-139 each coordinate sn-glycerol 3-phosphate. Ala-141 contacts NADPH. Positions 192, 245, 255, 256, and 257 each coordinate sn-glycerol 3-phosphate. The Proton acceptor role is filled by Lys-192. Arg-256 is a binding site for NADPH. NADPH is bound by residues Val-280 and Glu-282.

This sequence belongs to the NAD-dependent glycerol-3-phosphate dehydrogenase family.

It localises to the cytoplasm. It carries out the reaction sn-glycerol 3-phosphate + NAD(+) = dihydroxyacetone phosphate + NADH + H(+). It catalyses the reaction sn-glycerol 3-phosphate + NADP(+) = dihydroxyacetone phosphate + NADPH + H(+). It participates in membrane lipid metabolism; glycerophospholipid metabolism. In terms of biological role, catalyzes the reduction of the glycolytic intermediate dihydroxyacetone phosphate (DHAP) to sn-glycerol 3-phosphate (G3P), the key precursor for phospholipid synthesis. This chain is Glycerol-3-phosphate dehydrogenase [NAD(P)+], found in Staphylococcus aureus (strain USA300).